The chain runs to 362 residues: Heat-inducible transcription repressor HrcA (362 aa).

This sequence belongs to the HrcA family.

Negative regulator of class I heat shock genes (grpE-dnaK-dnaJ and groELS operons). Prevents heat-shock induction of these operons. The chain is Heat-inducible transcription repressor HrcA from Nitrobacter hamburgensis (strain DSM 10229 / NCIMB 13809 / X14).